The primary structure comprises 308 residues: Probable inositol oxygenase (308 aa).

Substrate-binding positions include arginine 49 and 106–108 (DDS). 3 residues coordinate Fe cation: histidine 119, histidine 144, and aspartate 145. Residues lysine 148 and 165–166 (GD) contribute to the substrate site. Residues histidine 217, histidine 243, and aspartate 276 each coordinate Fe cation. Substrate is bound at residue 243–244 (HS).

It belongs to the myo-inositol oxygenase family. Fe cation is required as a cofactor.

Its subcellular location is the cytoplasm. The enzyme catalyses myo-inositol + O2 = D-glucuronate + H2O + H(+). It functions in the pathway polyol metabolism; myo-inositol degradation into D-glucuronate; D-glucuronate from myo-inositol: step 1/1. In terms of biological role, involved in the biosynthesis of UDP-glucuronic acid (UDP-GlcA), providing nucleotide sugars for cell-wall polymers. May be also involved in plant ascorbate biosynthesis. The sequence is that of Probable inositol oxygenase from Oryza sativa subsp. japonica (Rice).